Consider the following 208-residue polypeptide: Uridine kinase (208 aa).

Position 11–18 (11–18 (GGTGSGKS)) interacts with ATP.

The protein belongs to the uridine kinase family.

Its subcellular location is the cytoplasm. It catalyses the reaction uridine + ATP = UMP + ADP + H(+). The catalysed reaction is cytidine + ATP = CMP + ADP + H(+). The protein operates within pyrimidine metabolism; CTP biosynthesis via salvage pathway; CTP from cytidine: step 1/3. It functions in the pathway pyrimidine metabolism; UMP biosynthesis via salvage pathway; UMP from uridine: step 1/1. In Clostridium perfringens (strain SM101 / Type A), this protein is Uridine kinase.